Reading from the N-terminus, the 552-residue chain is MSYENLANLIFPNIDKTPEYYFEKYPKRDLKEGAKVLRYAPSPTGFQHIGGVFASLINERLAHQSGGIFYLRIEDTDQKREVEGAIDDTIKTMHNFGMDFDEGITGENSEKGAYAPYKQSQRADIYRAFVKDLLRKGLAYPCFMTSEELEALREKQIAEKLTPGCYGEFAKYRDLSPEEAIKRIEAGENYVIRMKSPGNPEKRVVAHDMIKGEVSFPENLQDVVIIKGDGLPTYHFAHAIDDTLMRTTHVIRGEEWLSSLPIHLQMFEVLGVEAPKYAHIPTIMKMDGSSKRKLSKRKDPESAVSYYSEKGYPSQSVIEYLLNIINSAFEEWRAENPDADYHDYKVELDKMSKSGALFDLVKLNDVSKDVICKMKPEVVYDLYTNWAKEYDKEMYDLVTSKEAMMKEVFNIDKEGPKPRKDFAKWDEVREKIFYFFDELFDKETANDVELPKTLELEEAKRIIEAYEKAYNFNTDKDTWFSDLKEVAVELGYATDRKKYKKNPEEYKGMVSDVAGAVRAALTHRANTPDLYTIMQIMGEEAVRERFKKFLAL.

The 'HIGH' region motif lies at 41 to 51 (PSPTGFQHIGG). Positions 293-297 (KLSKR) match the 'KMSKS' region motif. Lys296 contributes to the ATP binding site.

Belongs to the class-I aminoacyl-tRNA synthetase family. Glutamate--tRNA ligase type 1 subfamily. Monomer.

It is found in the cytoplasm. The enzyme catalyses tRNA(Glu) + L-glutamate + ATP = L-glutamyl-tRNA(Glu) + AMP + diphosphate. Catalyzes the attachment of glutamate to tRNA(Glu) in a two-step reaction: glutamate is first activated by ATP to form Glu-AMP and then transferred to the acceptor end of tRNA(Glu). This chain is Glutamate--tRNA ligase, found in Clostridium perfringens (strain SM101 / Type A).